Consider the following 258-residue polypeptide: 5'-nucleotidase SurE (258 aa).

A divalent metal cation-binding residues include Asp-18, Asp-19, Ser-49, and Asn-102.

Belongs to the SurE nucleotidase family. It depends on a divalent metal cation as a cofactor.

It localises to the cytoplasm. It catalyses the reaction a ribonucleoside 5'-phosphate + H2O = a ribonucleoside + phosphate. In terms of biological role, nucleotidase that shows phosphatase activity on nucleoside 5'-monophosphates. The chain is 5'-nucleotidase SurE from Vibrio campbellii (strain ATCC BAA-1116).